The chain runs to 1369 residues: Rho guanine nucleotide exchange factor 10 (1369 aa).

The interval Met-1–Lys-106 is disordered. Acidic residues predominate over residues Asn-46–Pro-64. Residues Glu-83–Pro-100 show a composition bias toward low complexity. At Ser-180 the chain carries Phosphoserine. The disordered stretch occupies residues Glu-184 to Met-254. Residues Pro-196–Asp-209 show a composition bias toward polar residues. Positions Lys-304–Asp-355 form a coiled coil. A Phosphoserine modification is found at Ser-379. The 188-residue stretch at Val-421–Arg-608 folds into the DH domain. 2 disordered regions span residues Lys-1226–Gly-1260 and Gln-1277–Leu-1297. Over residues Ser-1279–Ser-1296 the composition is skewed to low complexity. Ser-1287 bears the Phosphoserine mark. An N5-methylglutamine modification is found at Gln-1338.

Post-translationally, methylated at Gln-1338 by N6AMT1.

In terms of biological role, may play a role in developmental myelination of peripheral nerves. The sequence is that of Rho guanine nucleotide exchange factor 10 (ARHGEF10) from Homo sapiens (Human).